Consider the following 87-residue polypeptide: Polyketide-8 synthase acyl carrier protein 2 (87 aa).

The Carrier domain occupies 8–83; sequence ALDKEQLREL…GTYELLTSKL (76 aa). Ser43 carries the O-(pantetheine 4'-phosphoryl)serine modification.

In terms of processing, 4'-phosphopantetheine is transferred from CoA to a specific serine of the apo-ACP-like protein.

Functionally, acyl carrier protein. The sequence is that of Polyketide-8 synthase acyl carrier protein 2 from Streptomyces avermitilis (strain ATCC 31267 / DSM 46492 / JCM 5070 / NBRC 14893 / NCIMB 12804 / NRRL 8165 / MA-4680).